Here is a 1189-residue protein sequence, read N- to C-terminus: Pumilio homolog 1 (1189 aa).

Disordered stretches follow at residues 24–65 (QHAQ…SSPV), 233–288 (SCLR…QNGI), 491–525 (QQTTQQTQQGQQQVLRGGASQRPLTPNQNQQGQQT), 614–652 (AGTTNGPFRPLGTQQPQPQPQQQPTNNLASSSFYGNNSL), and 743–774 (GPVGMPLPSQGPGHSQTPPPSLSSHGSSSSLN). The span at 45–58 (QAQPQPAANQALAA) shows a compositional bias: low complexity. Over residues 250–277 (NDKGDKKNKGTFDGDKLGDLKEEGDVMD) the composition is skewed to basic and acidic residues. The span at 491 to 503 (QQTTQQTQQGQQQ) shows a compositional bias: low complexity. Positions 512–525 (RPLTPNQNQQGQQT) are enriched in polar residues. Composition is skewed to low complexity over residues 627-652 (QQPQPQPQQQPTNNLASSSFYGNNSL) and 764-774 (LSSHGSSSSLN). The PUM-HD domain occupies 829–1171 (GRSRLLEDFR…HILAKLEKYY (343 aa)). Pumilio repeat units lie at residues 849–884 (EIAGHIMEFSQDQHGSRFIQLKLERATPAERQLVFN), 885–920 (EILQAAYQLMVDVFGNYVIQKFFEFGSLEQKLALAE), 921–958 (RIRGHVLSLALQMYGCRVIQKALEFIPPDQQVINEMVR), 959–994 (ELDGHVLKCVKDQNGNHVVQKCIECVQPQSLQFIID), 995–1030 (AFKGQVFALSTHPYGCRVIQRILEHCLPEQTLPILE), 1031–1066 (ELHQHTEQLVQDQYGNYVIQHVLEHGRPEDKSKIVA), 1067–1102 (EIRGNVLVLSQHKFASNVVEKCVTHASRTERAMLID), and 1106–1145 (TMNDGPHSALYTMMKDQYANYVVQKMIDVAEPAQRKIVMH). Residues 864 to 868 (SRFIQ) form an adenine-nucleotide binding in RNA target region. Positions 900–904 (NYVIQ) are uracil-nucleotide binding in RNA target. Residues 936–940 (CRVIQ) are adenine-nucleotide binding in RNA target. A non-specific-nucleotide binding in RNA target region spans residues 974-978 (NHVVQ). Residues 1010 to 1014 (CRVIQ) are adenine-nucleotide binding in RNA target. The uracil-nucleotide binding in RNA target stretch occupies residues 1046–1050 (NYVIQ). Guanine-nucleotide binding in RNA target stretches follow at residues 1082-1086 (SNVVE) and 1083-1086 (NVVE). Residues 1125–1129 (NYVVQ) form a uracil-nucleotide binding in RNA target region.

Detected in embryonic male and female gonads, heart, liver and muscle. Detected in adult brain, testis, ovary, heart, lung, spleen, kidney and muscle.

The protein resides in the cytoplasm. It is found in the P-body. It localises to the cytoplasmic granule. In terms of biological role, sequence-specific RNA-binding protein that acts as a post-transcriptional repressor by binding the 3'-UTR of mRNA targets. Binds to an RNA consensus sequence, the Pumilio Response Element (PRE), 5'-UGUANAUA-3', that is related to the Nanos Response Element (NRE). Mediates post-transcriptional repression of transcripts via different mechanisms: acts via direct recruitment of the CCR4-POP2-NOT deadenylase leading to translational inhibition and mRNA degradation. Also mediates deadenylation-independent repression by promoting accessibility of miRNAs. This is Pumilio homolog 1 (PUM1) from Gallus gallus (Chicken).